The primary structure comprises 299 residues: Very long chain fatty acid elongase 5 (299 aa).

M1 carries the post-translational modification N-acetylmethionine. 7 consecutive transmembrane segments (helical) span residues W26–V46, I64–V84, V112–L132, I139–M158, F168–S187, G205–C225, and F227–T247.

Belongs to the ELO family. ELOVL5 subfamily. Interacts with TECR. As to expression, highly expressed in lung and brain.

The protein resides in the endoplasmic reticulum membrane. Its subcellular location is the cell projection. The protein localises to the dendrite. The catalysed reaction is a very-long-chain acyl-CoA + malonyl-CoA + H(+) = a very-long-chain 3-oxoacyl-CoA + CO2 + CoA. The enzyme catalyses (6Z,9Z,12Z,15Z)-octadecatetraenoyl-CoA + malonyl-CoA + H(+) = (8Z,11Z,14Z,17Z)-3-oxoicosatetraenoyl-CoA + CO2 + CoA. It carries out the reaction (6Z,9Z,12Z)-octadecatrienoyl-CoA + malonyl-CoA + H(+) = (8Z,11Z,14Z)-3-oxoeicosatrienoyl-CoA + CO2 + CoA. It catalyses the reaction (5Z,8Z,11Z,14Z,17Z)-eicosapentaenoyl-CoA + malonyl-CoA + H(+) = 3-oxo-(7Z,10Z,13Z,16Z,19Z)-docosapentaenoyl-CoA + CO2 + CoA. The catalysed reaction is (5Z,8Z,11Z,14Z)-eicosatetraenoyl-CoA + malonyl-CoA + H(+) = (7Z,10Z,13Z,16Z)-3-oxodocosatetraenoyl-CoA + CO2 + CoA. The enzyme catalyses (9Z,12Z,15Z)-octadecatrienoyl-CoA + malonyl-CoA + H(+) = (11Z,14Z,17Z)-3-oxoeicosatrienoyl-CoA + CO2 + CoA. It carries out the reaction (9Z)-hexadecenoyl-CoA + malonyl-CoA + H(+) = 3-oxo-(11Z)-octadecenoyl-CoA + CO2 + CoA. It catalyses the reaction (9Z)-octadecenoyl-CoA + malonyl-CoA + H(+) = 3-oxo-(11Z)-eicosenoyl-CoA + CO2 + CoA. The catalysed reaction is (11Z)-octadecenoyl-CoA + malonyl-CoA + H(+) = 3-oxo-(13Z)-eicosenoyl-CoA + CO2 + CoA. The enzyme catalyses (9Z,12Z)-octadecadienoyl-CoA + malonyl-CoA + H(+) = (11Z,14Z)-3-oxoicosa-11,14-dienoyl-CoA + CO2 + CoA. Its pathway is lipid metabolism; polyunsaturated fatty acid biosynthesis. Catalyzes the first and rate-limiting reaction of the four reactions that constitute the long-chain fatty acids elongation cycle. This endoplasmic reticulum-bound enzymatic process allows the addition of 2 carbons to the chain of long- and very long-chain fatty acids (VLCFAs) per cycle. Condensing enzyme that acts specifically toward polyunsaturated acyl-CoA with the higher activity toward C18:3(n-6) acyl-CoA. May participate in the production of monounsaturated and of polyunsaturated VLCFAs of different chain lengths that are involved in multiple biological processes as precursors of membrane lipids and lipid mediators. In conditions where the essential linoleic and alpha linoleic fatty acids are lacking it is also involved in the synthesis of Mead acid from oleic acid. In Rattus norvegicus (Rat), this protein is Very long chain fatty acid elongase 5.